A 1120-amino-acid polypeptide reads, in one-letter code: Phosphatidylinositide phosphatase SAC2 (1120 aa).

The SAC domain maps to 167–518; sequence YKIFMDSDSF…GDTISRQYAG (352 aa). A hSac2 domain is found at 593 to 760; that stretch reads RGAQEQVSLL…RHSKPHEDIM (168 aa). 2 disordered regions span residues 837 to 881 and 979 to 1008; these read SSLE…SREN and PAPKPQGPQVPLAPDAKLGSSHSQNQLPRP. A compositionally biased stretch (basic and acidic residues) spans 851–860; sequence LKDHGPHSEE. Polar residues-rich tracts occupy residues 864–879 and 998–1007; these read DSDSYNSDEQPCSGSR and SSHSQNQLPR.

It localises to the membrane. The protein localises to the clathrin-coated pit. Its subcellular location is the early endosome. It is found in the recycling endosome. The enzyme catalyses a myo-inositol phosphate + H2O = myo-inositol + phosphate. Inositol 4-phosphatase which mainly acts on phosphatidylinositol 4-phosphate. May be functionally linked to OCRL, which converts phosphatidylinositol 4,5-bisphosphate to phosphatidylinositol, for a sequential dephosphorylation of phosphatidylinositol 4,5-bisphosphate at the 5 and 4 position of inositol, thus playing an important role in the endocytic recycling. The polypeptide is Phosphatidylinositide phosphatase SAC2 (Danio rerio (Zebrafish)).